The following is a 253-amino-acid chain: 2-dehydro-3-deoxy-D-gluconate 5-dehydrogenase (253 aa).

An NAD(+)-binding site is contributed by 14 to 38 (VVTGCDTGLGQGMALGLAQAGCDIV). Position 145 (serine 145) interacts with substrate. Tyrosine 158 (proton acceptor) is an active-site residue.

Belongs to the short-chain dehydrogenases/reductases (SDR) family. As to quaternary structure, homotetramer.

The enzyme catalyses 2-dehydro-3-deoxy-D-gluconate + NAD(+) = 3-deoxy-D-glycero-2,5-hexodiulosonate + NADH + H(+). It carries out the reaction 4-pregnen-20,21-diol-3-one + NAD(+) = 21-hydroxyprogesterone + NADH + H(+). Catalyzes the reversible reduction of 2,5-diketo-3-deoxygluconate (DKII or 4,6-dihydroxy-2,5-dioxohexanoate) into 2-keto-3-deoxygluconate (KDG or 2-dehydro-3-deoxygluconate) with a concomitant oxidation of NADH. To a lesser extent, can also reduce 5-keto-D-gluconate and oxidize D-gluconate and 1,2-propanediol. Together with KduI, seems to play a role in the catabolism of hexuronates under osmotic stress conditions, substituting for the regular hexuronate degrading enzymes UxaABC and UxuAB whose expression is repressed in these conditions. In vitro, also exhibits NADH-dependent 20-ketosteroid reductase activity against eukaryotic steroid hormone 11-deoxycorticosterone (11-DOC), which is converted into the product 4-pregnen-20,21-diol-3-one. In addition to 11-DOC, five other C21 steroid compounds (11-deoxycortisol, cortisol, corticosterone, cortisone, and 21-hydroxypregnenolone) are reduced by KduD, but steroids lacking the hydroxyl group at C21 position, such as pregnenolone, testosterone propionate, cortisone acetate, or progesterone, cannot be used as substrate. In Escherichia coli (strain K12), this protein is 2-dehydro-3-deoxy-D-gluconate 5-dehydrogenase.